Reading from the N-terminus, the 311-residue chain is Metal-staphylopine import system permease protein CntB (311 aa).

The next 6 membrane-spanning stretches (helical) occupy residues 9–29 (IALM…LTYI), 105–125 (LTII…VVSA), 139–159 (VAFF…IIYV), 173–193 (GPES…GIYF), 237–257 (IFCM…YIFA), and 274–294 (FPVI…FNTL). The 197-residue stretch at 99-295 (FMNTLKLTII…VLFIVFNTLA (197 aa)) folds into the ABC transmembrane type-1 domain.

It belongs to the binding-protein-dependent transport system permease family. As to quaternary structure, the complex is composed of two ATP-binding proteins (CntD and CntF), two transmembrane proteins (CntB and CntC) and a solute-binding protein (CntA).

It localises to the cell membrane. Functionally, part of the ABC transporter complex CntABCDF (Opp1) involved in the uptake of metal in complex with the metallophore staphylopine (StP). May be involved in the import of a large array of divalent metals ions such as nickel, cobalt, zinc, copper and iron. Probably responsible for the translocation of the substrate across the membrane. This chain is Metal-staphylopine import system permease protein CntB, found in Staphylococcus aureus (strain Mu50 / ATCC 700699).